A 189-amino-acid polypeptide reads, in one-letter code: NADH-quinone oxidoreductase subunit B (189 aa).

[4Fe-4S] cluster contacts are provided by Cys-39, Cys-40, Cys-104, and Cys-135.

It belongs to the complex I 20 kDa subunit family. As to quaternary structure, NDH-1 is composed of 14 different subunits. Subunits NuoB, C, D, E, F, and G constitute the peripheral sector of the complex. The cofactor is [4Fe-4S] cluster.

The protein localises to the cell inner membrane. The catalysed reaction is a quinone + NADH + 5 H(+)(in) = a quinol + NAD(+) + 4 H(+)(out). In terms of biological role, NDH-1 shuttles electrons from NADH, via FMN and iron-sulfur (Fe-S) centers, to quinones in the respiratory chain. The immediate electron acceptor for the enzyme in this species is believed to be a menaquinone. Couples the redox reaction to proton translocation (for every two electrons transferred, four hydrogen ions are translocated across the cytoplasmic membrane), and thus conserves the redox energy in a proton gradient. The sequence is that of NADH-quinone oxidoreductase subunit B from Chlorobium phaeobacteroides (strain DSM 266 / SMG 266 / 2430).